The chain runs to 138 residues: 1,4-dihydroxy-2-naphthoyl-CoA hydrolase (138 aa).

Asp-15 is a catalytic residue.

It belongs to the 4-hydroxybenzoyl-CoA thioesterase family. DHNA-CoA hydrolase subfamily.

It carries out the reaction 1,4-dihydroxy-2-naphthoyl-CoA + H2O = 1,4-dihydroxy-2-naphthoate + CoA + H(+). It participates in cofactor biosynthesis; phylloquinone biosynthesis. The protein operates within quinol/quinone metabolism; 1,4-dihydroxy-2-naphthoate biosynthesis; 1,4-dihydroxy-2-naphthoate from chorismate: step 7/7. Catalyzes the hydrolysis of 1,4-dihydroxy-2-naphthoyl-CoA (DHNA-CoA) to 1,4-dihydroxy-2-naphthoate (DHNA), a reaction involved in phylloquinone (vitamin K1) biosynthesis. The polypeptide is 1,4-dihydroxy-2-naphthoyl-CoA hydrolase (Trichodesmium erythraeum (strain IMS101)).